The following is a 276-amino-acid chain: Rhamnulose-1-phosphate aldolase (276 aa).

Residue Glu-117 is part of the active site. Positions 141, 143, and 212 each coordinate Zn(2+).

This sequence belongs to the aldolase class II family. RhaD subfamily. As to quaternary structure, homotetramer. Zn(2+) is required as a cofactor.

Its subcellular location is the cytoplasm. It catalyses the reaction L-rhamnulose 1-phosphate = (S)-lactaldehyde + dihydroxyacetone phosphate. It participates in carbohydrate degradation; L-rhamnose degradation; glycerone phosphate from L-rhamnose: step 3/3. Catalyzes the reversible cleavage of L-rhamnulose-1-phosphate to dihydroxyacetone phosphate (DHAP) and L-lactaldehyde. This is Rhamnulose-1-phosphate aldolase from Klebsiella pneumoniae subsp. pneumoniae (strain ATCC 700721 / MGH 78578).